Reading from the N-terminus, the 1240-residue chain is ABC transporter B family member 17 (1240 aa).

The ABC transmembrane type-1 1 domain occupies 35-324 (MALGLIGAVG…SLSNLKYFSE (290 aa)). A helical membrane pass occupies residues 36 to 56 (ALGLIGAVGDGFITPVVVFIF). Asparagine 70 carries an N-linked (GlcNAc...) asparagine glycan. Helical transmembrane passes span 81–101 (VVAL…EGYC), 158–180 (LPNF…ILMW), 184–206 (IVGF…ALVS), 264–284 (GITI…TWYG), and 296–316 (GTVF…GQSL). Residues 359–595 (VEFNHVKFTY…IDGQYTSLVS (237 aa)) enclose the ABC transporter 1 domain. 394–401 (GGSGSGKS) serves as a coordination point for ATP. N-linked (GlcNAc...) asparagine glycosylation is found at asparagine 542, asparagine 609, and asparagine 642. Residues 672-960 (ALYGCLSAAL…AGTMTTDLAR (289 aa)) enclose the ABC transmembrane type-1 2 domain. 2 helical membrane-spanning segments follow: residues 681 to 701 (LVGV…SVFF) and 714 to 734 (IYVL…ISQH). Asparagine 769 is a glycosylation site (N-linked (GlcNAc...) asparagine). A run of 4 helical transmembrane segments spans residues 793–815 (MSLL…VIAW), 817–839 (LAIV…RVLL), 896–919 (WLAG…NFWY), and 923–943 (LIAD…IFVT). Residues 995–1233 (ITFLNVDFAY…GPTGTYFSLA (239 aa)) form the ABC transporter 2 domain. An N-linked (GlcNAc...) asparagine glycan is attached at asparagine 1015. 1030 to 1037 (GTSGSGKS) is a binding site for ATP.

It belongs to the ABC transporter superfamily. ABCB family. Multidrug resistance exporter (TC 3.A.1.201) subfamily.

The protein localises to the membrane. The sequence is that of ABC transporter B family member 17 (ABCB17) from Arabidopsis thaliana (Mouse-ear cress).